Consider the following 348-residue polypeptide: Dihydroorotate dehydrogenase (quinone) (348 aa).

FMN is bound by residues 65-69 (AGMDK) and Thr89. Lys69 lines the substrate pocket. 114-118 (NRMGF) contributes to the substrate binding site. FMN-binding residues include Asn143 and Asn176. Asn176 serves as a coordination point for substrate. Residue Ser179 is the Nucleophile of the active site. Asn181 lines the substrate pocket. Residues Lys221 and Thr249 each contribute to the FMN site. 250–251 (NT) lines the substrate pocket. Residues Gly272, Gly301, and 322 to 323 (YT) contribute to the FMN site.

The protein belongs to the dihydroorotate dehydrogenase family. Type 2 subfamily. As to quaternary structure, monomer. FMN serves as cofactor.

It is found in the cell membrane. The catalysed reaction is (S)-dihydroorotate + a quinone = orotate + a quinol. The protein operates within pyrimidine metabolism; UMP biosynthesis via de novo pathway; orotate from (S)-dihydroorotate (quinone route): step 1/1. Catalyzes the conversion of dihydroorotate to orotate with quinone as electron acceptor. This chain is Dihydroorotate dehydrogenase (quinone), found in Akkermansia muciniphila (strain ATCC BAA-835 / DSM 22959 / JCM 33894 / BCRC 81048 / CCUG 64013 / CIP 107961 / Muc).